A 541-amino-acid polypeptide reads, in one-letter code: Calcium-dependent protein kinase 25 (541 aa).

The segment covering methionine 1–alanine 11 has biased composition (gly residues). The tract at residues methionine 1 to arginine 74 is disordered. Glycine 2 carries the N-myristoyl glycine lipid modification. The span at alanine 38 to proline 67 shows a compositional bias: low complexity. One can recognise a Protein kinase domain in the interval tyrosine 83 to isoleucine 341. Residues leucine 89–threonine 97 and lysine 112 each bind ATP. The active-site Proton acceptor is aspartate 207. The tract at residues alanine 347 to isoleucine 377 is autoinhibitory domain. 4 consecutive EF-hand domains span residues glutamate 384 to lysine 419, phenylalanine 420 to methionine 455, aspartate 456 to tyrosine 491, and alanine 493 to cysteine 526. Ca(2+) is bound by residues aspartate 397, aspartate 399, serine 401, threonine 403, glutamate 408, aspartate 433, aspartate 435, asparagine 437, glutamate 444, aspartate 469, aspartate 471, serine 473, tyrosine 475, glutamate 480, aspartate 504, asparagine 506, aspartate 508, arginine 510, and glutamate 515.

This sequence belongs to the protein kinase superfamily. Ser/Thr protein kinase family. CDPK subfamily. Specifically expressed in heading panicles, spikelets and mature pollen grains. Not expressed in vegetative tissues.

The protein resides in the membrane. The catalysed reaction is L-seryl-[protein] + ATP = O-phospho-L-seryl-[protein] + ADP + H(+). It catalyses the reaction L-threonyl-[protein] + ATP = O-phospho-L-threonyl-[protein] + ADP + H(+). With respect to regulation, activated by calcium. Autophosphorylation may play an important role in the regulation of the kinase activity. In terms of biological role, may play a role in signal transduction pathways that involve calcium as a second messenger. The chain is Calcium-dependent protein kinase 25 from Oryza sativa subsp. japonica (Rice).